We begin with the raw amino-acid sequence, 139 residues long: Nucleoside diphosphate kinase (139 aa).

Residues Lys11, Phe59, Arg87, Thr93, Arg104, and Asn114 each coordinate ATP. His117 acts as the Pros-phosphohistidine intermediate in catalysis.

The protein belongs to the NDK family. As to quaternary structure, homotetramer. Requires Mg(2+) as cofactor.

It is found in the cytoplasm. It catalyses the reaction a 2'-deoxyribonucleoside 5'-diphosphate + ATP = a 2'-deoxyribonucleoside 5'-triphosphate + ADP. The catalysed reaction is a ribonucleoside 5'-diphosphate + ATP = a ribonucleoside 5'-triphosphate + ADP. In terms of biological role, major role in the synthesis of nucleoside triphosphates other than ATP. The ATP gamma phosphate is transferred to the NDP beta phosphate via a ping-pong mechanism, using a phosphorylated active-site intermediate. In Coxiella burnetii (strain CbuK_Q154) (Coxiella burnetii (strain Q154)), this protein is Nucleoside diphosphate kinase.